The following is a 629-amino-acid chain: 1-deoxy-D-xylulose-5-phosphate synthase (629 aa).

Thiamine diphosphate is bound by residues His78 and 119 to 121 (AHS). Asp150 contributes to the Mg(2+) binding site. Thiamine diphosphate-binding positions include 151–152 (GA), Asn179, Tyr286, and Glu368. Asn179 is a Mg(2+) binding site.

The protein belongs to the transketolase family. DXPS subfamily. As to quaternary structure, homodimer. Requires Mg(2+) as cofactor. Thiamine diphosphate is required as a cofactor.

It catalyses the reaction D-glyceraldehyde 3-phosphate + pyruvate + H(+) = 1-deoxy-D-xylulose 5-phosphate + CO2. Its pathway is metabolic intermediate biosynthesis; 1-deoxy-D-xylulose 5-phosphate biosynthesis; 1-deoxy-D-xylulose 5-phosphate from D-glyceraldehyde 3-phosphate and pyruvate: step 1/1. In terms of biological role, catalyzes the acyloin condensation reaction between C atoms 2 and 3 of pyruvate and glyceraldehyde 3-phosphate to yield 1-deoxy-D-xylulose-5-phosphate (DXP). This chain is 1-deoxy-D-xylulose-5-phosphate synthase, found in Acidovorax sp. (strain JS42).